A 236-amino-acid polypeptide reads, in one-letter code: 2-C-methyl-D-erythritol 4-phosphate cytidylyltransferase (236 aa).

Belongs to the IspD/TarI cytidylyltransferase family. IspD subfamily. As to quaternary structure, homodimer.

The catalysed reaction is 2-C-methyl-D-erythritol 4-phosphate + CTP + H(+) = 4-CDP-2-C-methyl-D-erythritol + diphosphate. It participates in isoprenoid biosynthesis; isopentenyl diphosphate biosynthesis via DXP pathway; isopentenyl diphosphate from 1-deoxy-D-xylulose 5-phosphate: step 2/6. In terms of biological role, catalyzes the formation of 4-diphosphocytidyl-2-C-methyl-D-erythritol from CTP and 2-C-methyl-D-erythritol 4-phosphate (MEP). In Escherichia fergusonii (strain ATCC 35469 / DSM 13698 / CCUG 18766 / IAM 14443 / JCM 21226 / LMG 7866 / NBRC 102419 / NCTC 12128 / CDC 0568-73), this protein is 2-C-methyl-D-erythritol 4-phosphate cytidylyltransferase.